We begin with the raw amino-acid sequence, 513 residues long: DNA damage-binding protein CMR1 (513 aa).

Residues R35–K45 show a composition bias toward basic and acidic residues. A disordered region spans residues R35 to E103. WD repeat units follow at residues I183–E224, L237–L277, L329–D369, N386–L425, G438–L477, and E478–E513.

The protein belongs to the WD repeat DDB2/WDR76 family.

Its function is as follows. DNA-binding protein that binds to both single- and double-stranded DNA. Binds preferentially to UV-damaged DNA. May be involved in DNA-metabolic processes. This is DNA damage-binding protein CMR1 from Eremothecium gossypii (strain ATCC 10895 / CBS 109.51 / FGSC 9923 / NRRL Y-1056) (Yeast).